Consider the following 608-residue polypeptide: Aspartate--tRNA(Asp/Asn) ligase (608 aa).

Residue glutamate 175 participates in L-aspartate binding. The segment at 199-202 (QLFK) is aspartate. Arginine 221 lines the L-aspartate pocket. ATP contacts are provided by residues 221–223 (RDE) and glutamine 230. L-aspartate is bound at residue histidine 453. Glutamate 487 contacts ATP. Arginine 494 contributes to the L-aspartate binding site. Position 539–542 (539–542 (GWDR)) interacts with ATP. The interval 566–608 (IDPLTDAPAAITPQQRKEAGIDAKPKPKAEAQAEAQAEESAEK) is disordered. Basic and acidic residues predominate over residues 580 to 596 (QRKEAGIDAKPKPKAEA).

Belongs to the class-II aminoacyl-tRNA synthetase family. Type 1 subfamily. In terms of assembly, homodimer.

Its subcellular location is the cytoplasm. It catalyses the reaction tRNA(Asx) + L-aspartate + ATP = L-aspartyl-tRNA(Asx) + AMP + diphosphate. In terms of biological role, aspartyl-tRNA synthetase with relaxed tRNA specificity since it is able to aspartylate not only its cognate tRNA(Asp) but also tRNA(Asn). Reaction proceeds in two steps: L-aspartate is first activated by ATP to form Asp-AMP and then transferred to the acceptor end of tRNA(Asp/Asn). This Corynebacterium glutamicum (strain ATCC 13032 / DSM 20300 / JCM 1318 / BCRC 11384 / CCUG 27702 / LMG 3730 / NBRC 12168 / NCIMB 10025 / NRRL B-2784 / 534) protein is Aspartate--tRNA(Asp/Asn) ligase.